A 297-amino-acid polypeptide reads, in one-letter code: Carboxysome assembly protein CcmO (297 aa).

Residues 1 to 29 form a disordered region; the sequence is MPTSPTMTSVPIARSPRPSYQQINQHQPS. Over residues 18–29 the composition is skewed to polar residues; that stretch reads PSYQQINQHQPS. 2 BMC domains span residues 32–116 and 138–222; these read ALGL…AVFP and SIGL…HTLP.

It belongs to the bacterial microcompartments protein family. In terms of assembly, homooligomerizes, possibly as a trimer, interacts with CcmK in the carboxysome.

It localises to the carboxysome. In terms of biological role, required for formation of the carboxysome, a polyhedral inclusion where RuBisCO (ribulose bisphosphate carboxylase, rbcL-rbcS) is sequestered. Required for recruitment of major shell protein CcmK2 to the pre-carboxysome. Suggested to be a carboxysome shell protein. The protein is Carboxysome assembly protein CcmO of Synechocystis sp. (strain ATCC 27184 / PCC 6803 / Kazusa).